Here is an 870-residue protein sequence, read N- to C-terminus: Phenylalanine--tRNA ligase beta subunit (870 aa).

The tRNA-binding domain maps to 39–148 (AADLQKFEVA…EDAVVGEPFT (110 aa)). The B5 domain maps to 427–551 (PAKKTLDFPA…RIYGYDKIES (125 aa)). The RPE1 insert domain occupies 450 to 498 (LLHNEANKGEFVGNTEHSIAAYKEVREDASTGLTPKLPLEASYVKGLNI). Residues Asp-529, Asp-535, Glu-538, and Glu-539 each contribute to the Mg(2+) site. Residues 776 to 869 (SDYQANFRDY…IEQKFQGTLR (94 aa)) enclose the FDX-ACB domain.

Belongs to the phenylalanyl-tRNA synthetase beta subunit family. Type 1 subfamily. As to quaternary structure, tetramer of two alpha and two beta subunits. The cofactor is Mg(2+).

The protein localises to the cytoplasm. The enzyme catalyses tRNA(Phe) + L-phenylalanine + ATP = L-phenylalanyl-tRNA(Phe) + AMP + diphosphate + H(+). This Rickettsia bellii (strain RML369-C) protein is Phenylalanine--tRNA ligase beta subunit (pheT).